A 1058-amino-acid polypeptide reads, in one-letter code: COP1-interacting protein 7 (1058 aa).

Disordered stretches follow at residues 123–147, 262–281, and 330–463; these read LGGT…GDTV, HGNS…QEGR, and MGDV…GNDN. Composition is skewed to polar residues over residues 126 to 136 and 262 to 276; these read TWTSQKSTALS and HGNS…SFET. The short motif at 340 to 347 is the Nuclear localization signal 1 element; it reads SKKKKKKK. Basic residues predominate over residues 340–353; the sequence is SKKKKKKKKNKKKS. Over residues 403–414 the composition is skewed to acidic residues; sequence DSDESGEEEGFV. The short motif at 431–438 is the Nuclear localization signal 2 element; the sequence is ERRHKSTS. Basic residues predominate over residues 432 to 446; sequence RRHKSTSHRQRKHKS. Residues 447–462 show a composition bias toward basic and acidic residues; that stretch reads HNGDDDSSNKETKGND. Ser-477 is modified (phosphoserine). Positions 708 to 887 are disordered; it reads AGEQTLDGKE…KSVELSRDPS (180 aa). Residues 757–773 are compositionally biased toward basic and acidic residues; sequence SKSEMEEERKKRMEELL. The Nuclear localization signal 3 signature appears at 764–771; it reads ERKKRMEE. The segment covering 783-808 has biased composition (low complexity); sequence KSSGGSVSSSLASKKTPTVTKSVKSS. 2 stretches are compositionally biased toward basic and acidic residues: residues 860–869 and 878–887; these read KTEKAQEKKS and KSVELSRDPS. Phosphoserine occurs at positions 915, 986, and 992. The interval 1020-1041 is disordered; it reads STPPATEADHSRKKWNSEETSP. Positions 1026 to 1040 are enriched in basic and acidic residues; it reads EADHSRKKWNSEETS.

Interacts with COP1.

It localises to the nucleus. Its function is as follows. Exhibits transcriptional activation activity. Positive regulator of light-regulated genes, probably being a direct downstream target of COP1 for mediating light control of gene expression. The polypeptide is COP1-interacting protein 7 (Arabidopsis thaliana (Mouse-ear cress)).